The chain runs to 594 residues: NADH-ubiquinone oxidoreductase chain 5 (594 aa).

15 consecutive transmembrane segments (helical) span residues 1–21 (MNLFSSTTLTMLFVLTLPIMM), 43–63 (AFLISLVPMIAFTNTGQEMII), 87–107 (IVFAPVALFVTWSIMEFSMWY), 114–134 (INQFFKYLLLFLITMMILVTA), 137–157 (LFQLFIGWEGVGIMSFLLIGW), 171–191 (AILYNRIGDVGFIMAMAWFLS), 211–233 (LPLMGLILAATGKSAQFGLHPWL), 241–261 (TPVSALLHSSTMVVAGVFLLI), 272–292 (LMQTITMCLGAITTLFTAMCA), 301–320 (IIAFSTSSQLGLMMVTIGIN), 325–347 (AFLHICTHAFFKAMLFMCSGSII), 366–386 (MPFTTTTLIVGSMALTGVPFL), 409–429 (LLITLVATSLTAVYSTRIIFF), 457–477 (LMAGSIFAGFILSHNLPPMTT), and 486–506 (LKMTALAVTMLGFTLAFEITL).

This sequence belongs to the complex I subunit 5 family. In terms of assembly, core subunit of respiratory chain NADH dehydrogenase (Complex I) which is composed of 45 different subunits.

It localises to the mitochondrion inner membrane. The enzyme catalyses a ubiquinone + NADH + 5 H(+)(in) = a ubiquinol + NAD(+) + 4 H(+)(out). Functionally, core subunit of the mitochondrial membrane respiratory chain NADH dehydrogenase (Complex I) which catalyzes electron transfer from NADH through the respiratory chain, using ubiquinone as an electron acceptor. Essential for the catalytic activity and assembly of complex I. The protein is NADH-ubiquinone oxidoreductase chain 5 (MT-ND5) of Hippopotamus amphibius (Hippopotamus).